A 121-amino-acid chain; its full sequence is Autophagy-related protein 8f (121 aa).

Gly-117 carries the Phosphatidylethanolamine amidated glycine lipid modification. A propeptide spans 118 to 121 (FGSP) (removed in mature form).

Belongs to the ATG8 family. In terms of assembly, interacts with ATG4. Interacts with NBR1. Interacts with ATI1 and ATI2. Interacts with SH3P2. The C-terminal 4 residues are removed by ATG4 to expose Gly-117 at the C-terminus. This Gly-117 forms then a thioester bond with the 'Cys-558' of ATG7 (E1-like activating enzyme) before being transferred to the 'Cys-258' of ATG3 (the specific E2 conjugating enzyme), in order to be finally amidated with phosphatidylethanolamine. This lipid modification anchors ATG8 to autophagosomes. Constitutively expressed.

The protein resides in the cytoplasmic vesicle. Its subcellular location is the autophagosome membrane. It localises to the vacuole membrane. It is found in the cytoplasm. The protein localises to the cytoskeleton. In terms of biological role, ubiquitin-like modifier involved in autophagosomes formation. May mediate the delivery of the autophagosomes to the vacuole via the microtubule cytoskeleton. This Arabidopsis thaliana (Mouse-ear cress) protein is Autophagy-related protein 8f (ATG8F).